The sequence spans 660 residues: Probable beta-hexosaminidase fdl (660 aa).

An N-terminal signal peptide occupies residues 1 to 36 (MSLAVSLRRALLVLLTGAIFILTVLYWNQGVTKAQA). Asn210, Asn412, and Asn452 each carry an N-linked (GlcNAc...) asparagine glycan.

Belongs to the glycosyl hydrolase 20 family. In third instar larval and early pupal brains, expressed in cells sending projections across the interhemispheric junction. In adult brain, expressed in mushroom body, ellipsoid body and pars intercerebralis.

The enzyme catalyses Hydrolysis of terminal non-reducing N-acetyl-D-hexosamine residues in N-acetyl-beta-D-hexosaminides.. Functionally, involved in brain restructurization via hormonal control during metamorphosis. Implicated in N-glycan processing. This Drosophila melanogaster (Fruit fly) protein is Probable beta-hexosaminidase fdl (fdl).